A 107-amino-acid chain; its full sequence is SH3 domain-binding glutamic acid-rich-like protein 2 (107 aa).

Residues 61-67 carry the SH3-binding motif; it reads QGNPLPP.

It belongs to the SH3BGR family.

Its subcellular location is the nucleus. The sequence is that of SH3 domain-binding glutamic acid-rich-like protein 2 (SH3BGRL2) from Pongo abelii (Sumatran orangutan).